We begin with the raw amino-acid sequence, 244 residues long: 3-oxoacyl-[acyl-carrier-protein] reductase FabG (244 aa).

NADP(+) contacts are provided by residues 12 to 15 (GASR), Thr-37, 59 to 60 (NV), and Asn-86. Ser-138 is a binding site for substrate. Tyr-151 (proton acceptor) is an active-site residue. NADP(+) contacts are provided by residues 151 to 155 (YAAAK) and Ile-184.

It belongs to the short-chain dehydrogenases/reductases (SDR) family. As to quaternary structure, homotetramer.

It carries out the reaction a (3R)-hydroxyacyl-[ACP] + NADP(+) = a 3-oxoacyl-[ACP] + NADPH + H(+). It functions in the pathway lipid metabolism; fatty acid biosynthesis. Catalyzes the NADPH-dependent reduction of beta-ketoacyl-ACP substrates to beta-hydroxyacyl-ACP products, the first reductive step in the elongation cycle of fatty acid biosynthesis. This chain is 3-oxoacyl-[acyl-carrier-protein] reductase FabG (fabG), found in Vibrio cholerae serotype O1 (strain ATCC 39315 / El Tor Inaba N16961).